Consider the following 122-residue polypeptide: Large ribosomal subunit protein uL14 (122 aa).

It belongs to the universal ribosomal protein uL14 family. As to quaternary structure, part of the 50S ribosomal subunit. Forms a cluster with proteins L3 and L19. In the 70S ribosome, L14 and L19 interact and together make contacts with the 16S rRNA in bridges B5 and B8.

Binds to 23S rRNA. Forms part of two intersubunit bridges in the 70S ribosome. This Synechococcus sp. (strain JA-2-3B'a(2-13)) (Cyanobacteria bacterium Yellowstone B-Prime) protein is Large ribosomal subunit protein uL14.